We begin with the raw amino-acid sequence, 167 residues long: 3-isopropylmalate dehydratase small subunit (167 aa).

It belongs to the LeuD family. LeuD type 2 subfamily. Heterodimer of LeuC and LeuD.

The enzyme catalyses (2R,3S)-3-isopropylmalate = (2S)-2-isopropylmalate. Its pathway is amino-acid biosynthesis; L-leucine biosynthesis; L-leucine from 3-methyl-2-oxobutanoate: step 2/4. Its function is as follows. Catalyzes the isomerization between 2-isopropylmalate and 3-isopropylmalate, via the formation of 2-isopropylmaleate. The chain is 3-isopropylmalate dehydratase small subunit from Wolinella succinogenes (strain ATCC 29543 / DSM 1740 / CCUG 13145 / JCM 31913 / LMG 7466 / NCTC 11488 / FDC 602W) (Vibrio succinogenes).